The following is a 745-amino-acid chain: Phosphate transporter PHO1 homolog 4 (745 aa).

The SPX domain occupies 1 to 290; sequence MRFGKEFVSQ…KRNAAKLYME (290 aa). At 1-342 the chain is on the cytoplasmic side; sequence MRFGKEFVSQ…KINKERHLIT (342 aa). The helical transmembrane segment at 343 to 363 threads the bilayer; the sequence is FSTGFFFGCGISLIVALGLII. At 364 to 383 the chain is on the extracellular side; it reads HARNIMGTPGQRTYMETMFP. Residues 384–404 form a helical membrane-spanning segment; the sequence is LYRFFGFVVLHMDVYAANIYF. Residues 405–427 lie on the Cytoplasmic side of the membrane; sequence WRRYRVNYSFIFGFKQGTELGYR. The helical transmembrane segment at 428–448 threads the bilayer; it reads HVLLLSFGLGTLSLCAVLLNL. Over 449–464 the chain is Extracellular; that stretch reads DMEMDAQTKDYRLVTE. A helical transmembrane segment spans residues 465-485; sequence LIPLFLLVLVIIIVLCPFNIL. Over 486–615 the chain is Cytoplasmic; it reads YRSSRFFFLS…YTLNRGSNWN (130 aa). One can recognise an EXS domain in the interval 550–744; that stretch reads TSNIGFRTFY…NYEEDGDHHN (195 aa). A helical transmembrane segment spans residues 616–636; the sequence is ITAWVFSGVATFYGTYWDIVL. Topologically, residues 637–660 are extracellular; sequence DWGLLQRGCKNSFLRDKLLVPHKT. A helical transmembrane segment spans residues 661–681; sequence VYYAAMVLNVLLRLVWLQTVL. The Cytoplasmic segment spans residues 682 to 745; sequence DLKFSFLHRE…YEEDGDHHNN (64 aa).

The protein belongs to the SYG1 (TC 2.A.94) family. As to expression, expressed in root epidermis and cortex, leaf hydathodes, pollen grains and stigma apex.

It localises to the cell membrane. Its function is as follows. May transport inorganic phosphate (Pi). The chain is Phosphate transporter PHO1 homolog 4 (PHO1-H4) from Arabidopsis thaliana (Mouse-ear cress).